The sequence spans 127 residues: Large ribosomal subunit protein bL12 (127 aa).

The protein belongs to the bacterial ribosomal protein bL12 family. As to quaternary structure, homodimer. Part of the ribosomal stalk of the 50S ribosomal subunit. Forms a multimeric L10(L12)X complex, where L10 forms an elongated spine to which 2 to 4 L12 dimers bind in a sequential fashion. Binds GTP-bound translation factors.

Forms part of the ribosomal stalk which helps the ribosome interact with GTP-bound translation factors. Is thus essential for accurate translation. The chain is Large ribosomal subunit protein bL12 from Carboxydothermus hydrogenoformans (strain ATCC BAA-161 / DSM 6008 / Z-2901).